The chain runs to 341 residues: Tyrosine recombinase XerC (341 aa).

A Core-binding (CB) domain is found at 14–105 (PDAAEALERW…GVRSFFRWAD (92 aa)). Positions 126 to 309 (PLPRPLAADD…DAEHLLSVYE (184 aa)) constitute a Tyr recombinase domain. Residues R169, K193, H261, R264, and H287 contribute to the active site. Y296 (O-(3'-phospho-DNA)-tyrosine intermediate) is an active-site residue.

Belongs to the 'phage' integrase family. XerC subfamily. In terms of assembly, forms a cyclic heterotetrameric complex composed of two molecules of XerC and two molecules of XerD.

The protein localises to the cytoplasm. Its function is as follows. Site-specific tyrosine recombinase, which acts by catalyzing the cutting and rejoining of the recombining DNA molecules. The XerC-XerD complex is essential to convert dimers of the bacterial chromosome into monomers to permit their segregation at cell division. It also contributes to the segregational stability of plasmids. In Rhodospirillum centenum (strain ATCC 51521 / SW), this protein is Tyrosine recombinase XerC.